The chain runs to 382 residues: Succinyl-diaminopimelate desuccinylase (382 aa).

Zn(2+) is bound at residue His-68. Residue Asp-70 is part of the active site. Position 101 (Asp-101) interacts with Zn(2+). Glu-135 serves as the catalytic Proton acceptor. Positions 136, 164, and 350 each coordinate Zn(2+).

Belongs to the peptidase M20A family. DapE subfamily. Homodimer. Requires Zn(2+) as cofactor. Co(2+) is required as a cofactor.

The catalysed reaction is N-succinyl-(2S,6S)-2,6-diaminopimelate + H2O = (2S,6S)-2,6-diaminopimelate + succinate. It participates in amino-acid biosynthesis; L-lysine biosynthesis via DAP pathway; LL-2,6-diaminopimelate from (S)-tetrahydrodipicolinate (succinylase route): step 3/3. Functionally, catalyzes the hydrolysis of N-succinyl-L,L-diaminopimelic acid (SDAP), forming succinate and LL-2,6-diaminopimelate (DAP), an intermediate involved in the bacterial biosynthesis of lysine and meso-diaminopimelic acid, an essential component of bacterial cell walls. This Acidithiobacillus ferrooxidans (strain ATCC 23270 / DSM 14882 / CIP 104768 / NCIMB 8455) (Ferrobacillus ferrooxidans (strain ATCC 23270)) protein is Succinyl-diaminopimelate desuccinylase.